A 93-amino-acid polypeptide reads, in one-letter code: MPKNAVVILRYGPYSAAGLPVEHHTFRLQGLQAVLAIDGHEVILEKIEDWNVVELMVNEEVIFHCNIKDLEFGGDGKLDPLCEKARIAVLNAY.

It belongs to the UPF0728 family.

This is UPF0728 protein C10orf53 (C10orf53) from Homo sapiens (Human).